Here is a 70-residue protein sequence, read N- to C-terminus: Large ribosomal subunit protein bL31 (70 aa).

This sequence belongs to the bacterial ribosomal protein bL31 family. Type A subfamily. In terms of assembly, part of the 50S ribosomal subunit.

Its function is as follows. Binds the 23S rRNA. The chain is Large ribosomal subunit protein bL31 from Chlorobium chlorochromatii (strain CaD3).